We begin with the raw amino-acid sequence, 720 residues long: Fatty acid CoA ligase Acsl3 (720 aa).

The chain crosses the membrane as a helical; Signal-anchor for type III membrane protein span at residues 21–41 (ILLYFIHFLISLYTILTYIPF). Residues 42–720 (YFFSESRQEK…ADIERMYGRK (679 aa)) lie on the Cytoplasmic side of the membrane. At serine 683 the chain carries Phosphoserine.

It belongs to the ATP-dependent AMP-binding enzyme family. It depends on Mg(2+) as a cofactor.

It localises to the mitochondrion outer membrane. The protein resides in the peroxisome membrane. The protein localises to the microsome membrane. It is found in the endoplasmic reticulum membrane. The catalysed reaction is a long-chain fatty acid + ATP + CoA = a long-chain fatty acyl-CoA + AMP + diphosphate. The enzyme catalyses (5Z,8Z,11Z,14Z)-eicosatetraenoate + ATP + CoA = (5Z,8Z,11Z,14Z)-eicosatetraenoyl-CoA + AMP + diphosphate. It catalyses the reaction (E)-hexadec-2-enoate + ATP + CoA = (2E)-hexadecenoyl-CoA + AMP + diphosphate. It carries out the reaction 15-hydroxy-(5Z,8Z,11Z,13E)-eicosatetraenoate + ATP + CoA = 15-hydroxy-(5Z,8Z,11Z,13E)-eicosatetraenoyl-CoA + AMP + diphosphate. The catalysed reaction is 12-hydroxy-(5Z,8Z,10E,14Z)-eicosatetraenoate + ATP + CoA = 12-hydroxy-(5Z,8Z,10E,14Z)-eicosatetraenoyl-CoA + AMP + diphosphate. The enzyme catalyses 5-hydroxy-(6E,8Z,11Z,14Z)-eicosatetraenoate + ATP + CoA = 5-hydroxy-(6E,8Z,11Z,14Z)-eicosatetraenoyl-CoA + AMP + diphosphate. It catalyses the reaction 14,15-epoxy-(5Z,8Z,11Z)-eicosatrienoate + ATP + CoA = 14,15-epoxy-(5Z,8Z,11Z)-eicosatrienoyl-CoA + AMP + diphosphate. It carries out the reaction 11,12-epoxy-(5Z,8Z,14Z)-eicosatrienoate + ATP + CoA = 11,12-epoxy-(5Z,8Z,14Z)-eicosatrienoyl-CoA + AMP + diphosphate. The catalysed reaction is a medium-chain fatty acid + ATP + CoA = a medium-chain fatty acyl-CoA + AMP + diphosphate. The enzyme catalyses hexadecanoate + ATP + CoA = hexadecanoyl-CoA + AMP + diphosphate. It catalyses the reaction tetradecanoate + ATP + CoA = tetradecanoyl-CoA + AMP + diphosphate. It carries out the reaction dodecanoate + ATP + CoA = dodecanoyl-CoA + AMP + diphosphate. The catalysed reaction is octadecanoate + ATP + CoA = octadecanoyl-CoA + AMP + diphosphate. The enzyme catalyses eicosanoate + ATP + CoA = eicosanoyl-CoA + AMP + diphosphate. It catalyses the reaction (9Z)-octadecenoate + ATP + CoA = (9Z)-octadecenoyl-CoA + AMP + diphosphate. It carries out the reaction (9Z)-hexadecenoate + ATP + CoA = (9Z)-hexadecenoyl-CoA + AMP + diphosphate. The catalysed reaction is (9Z,12Z)-octadecadienoate + ATP + CoA = (9Z,12Z)-octadecadienoyl-CoA + AMP + diphosphate. The enzyme catalyses (9Z,12Z,15Z)-octadecatrienoate + ATP + CoA = (9Z,12Z,15Z)-octadecatrienoyl-CoA + AMP + diphosphate. It catalyses the reaction (4Z,7Z,10Z,13Z,16Z,19Z)-docosahexaenoate + ATP + CoA = (4Z,7Z,10Z,13Z,16Z,19Z)-docosahexaenoyl-CoA + AMP + diphosphate. It carries out the reaction (5Z,8Z,11Z,14Z,17Z)-eicosapentaenoate + ATP + CoA = (5Z,8Z,11Z,14Z,17Z)-eicosapentaenoyl-CoA + AMP + diphosphate. The catalysed reaction is a fatty acid + ATP + CoA = a fatty acyl-CoA + AMP + diphosphate. Its function is as follows. Acyl-CoA synthetases (ACSL) activates long-chain fatty acids for both synthesis of cellular lipids, and degradation via beta-oxidation. Required for the incorporation of fatty acids into phosphatidylcholine, the major phospholipid located on the surface of VLDL (very low density lipoproteins). Has mainly an anabolic role in energy metabolism. Mediates hepatic lipogenesis. Preferentially uses myristate, laurate, arachidonate and eicosapentaenoate as substrates. Both isoforms exhibit the same level of activity. This is Fatty acid CoA ligase Acsl3 from Homo sapiens (Human).